A 194-amino-acid polypeptide reads, in one-letter code: Peptidyl-tRNA hydrolase (194 aa).

Tyrosine 17 is a binding site for tRNA. Histidine 22 (proton acceptor) is an active-site residue. 3 residues coordinate tRNA: tyrosine 68, asparagine 70, and asparagine 116.

Belongs to the PTH family. As to quaternary structure, monomer.

The protein localises to the cytoplasm. It carries out the reaction an N-acyl-L-alpha-aminoacyl-tRNA + H2O = an N-acyl-L-amino acid + a tRNA + H(+). Its function is as follows. Hydrolyzes ribosome-free peptidyl-tRNAs (with 1 or more amino acids incorporated), which drop off the ribosome during protein synthesis, or as a result of ribosome stalling. In terms of biological role, catalyzes the release of premature peptidyl moieties from peptidyl-tRNA molecules trapped in stalled 50S ribosomal subunits, and thus maintains levels of free tRNAs and 50S ribosomes. The sequence is that of Peptidyl-tRNA hydrolase from Marinomonas sp. (strain MWYL1).